A 653-amino-acid chain; its full sequence is Macrolide export ATP-binding/permease protein MacB (653 aa).

An ABC transporter domain is found at I6–P244. An ATP-binding site is contributed by G42–S49. 4 helical membrane passes run L275–G295, F525–M545, F576–L596, and W616–W636.

Belongs to the ABC transporter superfamily. Macrolide exporter (TC 3.A.1.122) family. In terms of assembly, homodimer. Part of the tripartite efflux system MacAB-TolC, which is composed of an inner membrane transporter, MacB, a periplasmic membrane fusion protein, MacA, and an outer membrane component, TolC. The complex forms a large protein conduit and can translocate molecules across both the inner and outer membranes. Interacts with MacA.

The protein resides in the cell inner membrane. In terms of biological role, part of the tripartite efflux system MacAB-TolC. MacB is a non-canonical ABC transporter that contains transmembrane domains (TMD), which form a pore in the inner membrane, and an ATP-binding domain (NBD), which is responsible for energy generation. Confers resistance against macrolides. The polypeptide is Macrolide export ATP-binding/permease protein MacB (Sodalis glossinidius (strain morsitans)).